The primary structure comprises 130 residues: Ribosome-binding factor A (130 aa).

Belongs to the RbfA family. As to quaternary structure, monomer. Binds 30S ribosomal subunits, but not 50S ribosomal subunits or 70S ribosomes.

The protein localises to the cytoplasm. Functionally, one of several proteins that assist in the late maturation steps of the functional core of the 30S ribosomal subunit. Associates with free 30S ribosomal subunits (but not with 30S subunits that are part of 70S ribosomes or polysomes). Required for efficient processing of 16S rRNA. May interact with the 5'-terminal helix region of 16S rRNA. The polypeptide is Ribosome-binding factor A (Prochlorococcus marinus (strain MIT 9312)).